The following is a 515-amino-acid chain: Bifunctional purine biosynthesis protein PurH (515 aa).

In terms of domain architecture, MGS-like spans 1–145 (MTKRVLISVS…KNHASVTVVV (145 aa)).

It belongs to the PurH family.

It catalyses the reaction (6R)-10-formyltetrahydrofolate + 5-amino-1-(5-phospho-beta-D-ribosyl)imidazole-4-carboxamide = 5-formamido-1-(5-phospho-D-ribosyl)imidazole-4-carboxamide + (6S)-5,6,7,8-tetrahydrofolate. The catalysed reaction is IMP + H2O = 5-formamido-1-(5-phospho-D-ribosyl)imidazole-4-carboxamide. It participates in purine metabolism; IMP biosynthesis via de novo pathway; 5-formamido-1-(5-phospho-D-ribosyl)imidazole-4-carboxamide from 5-amino-1-(5-phospho-D-ribosyl)imidazole-4-carboxamide (10-formyl THF route): step 1/1. Its pathway is purine metabolism; IMP biosynthesis via de novo pathway; IMP from 5-formamido-1-(5-phospho-D-ribosyl)imidazole-4-carboxamide: step 1/1. This chain is Bifunctional purine biosynthesis protein PurH, found in Streptococcus pneumoniae (strain 70585).